The following is a 251-amino-acid chain: Insulin-induced gene 1 protein (251 aa).

Over 1–58 (MQTLEEHCWSCSCTRGRDKKGTKVSAWLARRVGKAMSSLNSLLSLAYSTLASSEGRSL) the chain is Cytoplasmic. A helical membrane pass occupies residues 59–81 (IQRSLVLFTVGVFLALVLNLLQI). Topologically, residues 82-100 (QRNVTLFPEEVIATIFSSA) are extracellular. Residues 101–118 (WWVPPCCGTAAAVVGLLY) form a helical membrane-spanning segment. The Cytoplasmic segment spans residues 119–133 (PCIDSRIGEPHKFKR). A helical membrane pass occupies residues 134-156 (EWASVMRCIAVFVGINHASAKLD). Topologically, residues 157–159 (FAN) are extracellular. A helical transmembrane segment spans residues 160 to 178 (NVQLSLTLAALSLGLWWTF). Topologically, residues 179–183 (DRSRS) are cytoplasmic. Residues 184 to 205 (GLGLGITIAFLATLITQFLVYN) form a helical membrane-spanning segment. Residues 206 to 219 (GVYQYTSPDFLYIR) are Extracellular-facing. A helical membrane pass occupies residues 220–237 (SWLPCIFFSGGVTVGNIG). Residues 238 to 251 (RQLAMGSSEKTHGD) lie on the Cytoplasmic side of the membrane. The KxHxx motif lies at 245–251 (SEKTHGD).

This sequence belongs to the INSIG family. Interacts with scap; interaction is direct and only takes place in the presence of sterols; it prevents interaction between scap and the coat protein complex II (COPII). Associates with the SCAP-SREBP complex; association is mediated via its interaction with scap and only takes place in the presence of sterols.

It is found in the endoplasmic reticulum membrane. In terms of biological role, oxysterol-binding protein that mediates feedback control of cholesterol synthesis by controlling both endoplasmic reticulum to Golgi transport of scap and degradation of hmgcr. Acts as a negative regulator of cholesterol biosynthesis by mediating the retention of the SCAP-SREBP complex in the endoplasmic reticulum, thereby blocking the processing of sterol regulatory element-binding proteins (SREBPs). Binds oxysterol, including 25-hydroxycholesterol, regulating interaction with scap and retention of the SCAP-SREBP complex in the endoplasmic reticulum. In presence of oxysterol, interacts with scap, retaining the SCAP-SREBP complex in the endoplasmic reticulum, thereby preventing scap from escorting SREBPs to the Golgi. Sterol deprivation reduces oxysterol-binding, disrupting the interaction between insig1 and scap, thereby promoting Golgi transport of the SCAP-SREBP complex, followed by processing and nuclear translocation of SREBPs. Also regulates cholesterol synthesis by regulating degradation of hmgcr. This is Insulin-induced gene 1 protein from Xenopus laevis (African clawed frog).